The sequence spans 354 residues: Ornithine cyclodeaminase (354 aa).

Residues R53 and K77 each contribute to the L-ornithine site. NAD(+) is bound by residues T92, R120, 147 to 148, D169, T209, 232 to 235, K239, and S300; these read AQ and VGGD. R120 contributes to the L-ornithine binding site. D235 lines the L-ornithine pocket. D235 functions as the Proton donor/acceptor in the catalytic mechanism. V301 is a binding site for L-ornithine.

This sequence belongs to the ornithine cyclodeaminase/mu-crystallin family. NAD(+) serves as cofactor.

The catalysed reaction is L-ornithine = L-proline + NH4(+). It participates in amino-acid biosynthesis; L-proline biosynthesis; L-proline from L-ornithine: step 1/1. Its activity is regulated as follows. Is subject to substrate inhibition. Is regulated by L-arginine, which stimulates enzymatic activity at 0.1-1 mM while inhibits activity at higher concentrations, and has pronounced effects on the optima for pH and temperature and on the Km for L-ornithine. Is not inhibited by L-proline. Functionally, catalyzes the conversion of L-ornithine into L-proline with release of ammonia. Is involved in the utilization of nopaline, a catabolic pathway that proceeds through L-arginine and L-ornithine to L-proline. Nopaline is a predominant opine in plant cells transformed with Ti plasmid pTiC58. This Agrobacterium fabrum (strain C58 / ATCC 33970) (Agrobacterium tumefaciens (strain C58)) protein is Ornithine cyclodeaminase.